The chain runs to 593 residues: Aspartate--tRNA(Asp/Asn) ligase (593 aa).

Residue Glu-176 coordinates L-aspartate. The aspartate stretch occupies residues 200-203; sequence QIFK. Residue Arg-222 coordinates L-aspartate. Residues 222-224 and Gln-231 contribute to the ATP site; that span reads RDE. His-450 contributes to the L-aspartate binding site. Glu-490 lines the ATP pocket. L-aspartate is bound at residue Arg-497. Residue 542 to 545 participates in ATP binding; sequence GLDR.

Belongs to the class-II aminoacyl-tRNA synthetase family. Type 1 subfamily. As to quaternary structure, homodimer.

The protein resides in the cytoplasm. It carries out the reaction tRNA(Asx) + L-aspartate + ATP = L-aspartyl-tRNA(Asx) + AMP + diphosphate. Functionally, aspartyl-tRNA synthetase with relaxed tRNA specificity since it is able to aspartylate not only its cognate tRNA(Asp) but also tRNA(Asn). Reaction proceeds in two steps: L-aspartate is first activated by ATP to form Asp-AMP and then transferred to the acceptor end of tRNA(Asp/Asn). In Symbiobacterium thermophilum (strain DSM 24528 / JCM 14929 / IAM 14863 / T), this protein is Aspartate--tRNA(Asp/Asn) ligase.